A 379-amino-acid polypeptide reads, in one-letter code: Protein RecA (379 aa).

79 to 86 (GPESSGKT) contributes to the ATP binding site.

This sequence belongs to the RecA family.

The protein resides in the cytoplasm. Can catalyze the hydrolysis of ATP in the presence of single-stranded DNA, the ATP-dependent uptake of single-stranded DNA by duplex DNA, and the ATP-dependent hybridization of homologous single-stranded DNAs. It interacts with LexA causing its activation and leading to its autocatalytic cleavage. In Streptococcus uberis (strain ATCC BAA-854 / 0140J), this protein is Protein RecA.